The sequence spans 727 residues: Polyphosphate kinase (727 aa).

Residue N82 participates in ATP binding. R412 and R442 together coordinate Mg(2+). The active-site Phosphohistidine intermediate is H472. The ATP site is built by Y505, R601, and H629.

The protein belongs to the polyphosphate kinase 1 (PPK1) family. Requires Mg(2+) as cofactor. In terms of processing, an intermediate of this reaction is the autophosphorylated ppk in which a phosphate is covalently linked to a histidine residue through a N-P bond.

It catalyses the reaction [phosphate](n) + ATP = [phosphate](n+1) + ADP. Its function is as follows. Catalyzes the reversible transfer of the terminal phosphate of ATP to form a long-chain polyphosphate (polyP). The polypeptide is Polyphosphate kinase (Pseudomonas putida (strain ATCC 47054 / DSM 6125 / CFBP 8728 / NCIMB 11950 / KT2440)).